A 211-amino-acid chain; its full sequence is MSAPKPFVIGIAGGTASGKTTLAQALARTLGERVALLPMDHYYKDLGHLPLEERLRVNYDHPDAFDLALYLEHAQALLRGLPVEMPVYDFRAYTRSPRRTPVRPAPVVILEGILVLYPKELRDLMDLKVFVDADADERFIRRLKRDVLERGRSLEGVVAQYLEQVKPMHLHFVEPTKRYADVIVPRGGQNPVALEMLAAKALARLARMGAA.

13-20 (GGTASGKT) contacts ATP.

The protein belongs to the uridine kinase family.

It localises to the cytoplasm. The catalysed reaction is uridine + ATP = UMP + ADP + H(+). It catalyses the reaction cytidine + ATP = CMP + ADP + H(+). It participates in pyrimidine metabolism; CTP biosynthesis via salvage pathway; CTP from cytidine: step 1/3. It functions in the pathway pyrimidine metabolism; UMP biosynthesis via salvage pathway; UMP from uridine: step 1/1. The polypeptide is Uridine kinase (Thermus thermophilus (strain ATCC BAA-163 / DSM 7039 / HB27)).